The following is a 248-amino-acid chain: Sugar fermentation stimulation protein homolog (248 aa).

Belongs to the SfsA family.

The protein is Sugar fermentation stimulation protein homolog of Methylorubrum extorquens (strain CM4 / NCIMB 13688) (Methylobacterium extorquens).